The sequence spans 249 residues: 3-deoxy-D-manno-octulosonic acid kinase (249 aa).

D175 is a catalytic residue.

This sequence belongs to the protein kinase superfamily. KdkA/RfaP family.

The protein resides in the cell inner membrane. The enzyme catalyses an alpha-Kdo-(2-&gt;6)-lipid IVA + ATP = a 4-O-phospho-alpha-Kdo-(2-&gt;6)-lipid IVA + ADP + H(+). It functions in the pathway bacterial outer membrane biogenesis; LPS core biosynthesis. Functionally, catalyzes the ATP-dependent phosphorylation of the 3-deoxy-D-manno-octulosonic acid (Kdo) residue in Kdo-lipid IV(A) at the 4-OH position. In Xylella fastidiosa (strain M23), this protein is 3-deoxy-D-manno-octulosonic acid kinase.